The primary structure comprises 190 residues: MTIAKIRCRLFIMKDKIIDAAIRRVPDFPKKGILFYDITGILVNPEVFSYCLDKMTEMYKDKKVDAVAAIEARGFIFAAPFAYKMGIPLILIRKKGKLPGETYSASYDLEYGQASVEVHKTDVVKGQKVLLLDDLIATGGTLNAARSILEEGGAKVVGFCGVVGLPFLNYSKVLGDLPVKTLIEYDSEKI.

Belongs to the purine/pyrimidine phosphoribosyltransferase family. Homodimer.

It localises to the cytoplasm. The enzyme catalyses AMP + diphosphate = 5-phospho-alpha-D-ribose 1-diphosphate + adenine. The protein operates within purine metabolism; AMP biosynthesis via salvage pathway; AMP from adenine: step 1/1. Functionally, catalyzes a salvage reaction resulting in the formation of AMP, that is energically less costly than de novo synthesis. The sequence is that of Adenine phosphoribosyltransferase from Treponema denticola (strain ATCC 35405 / DSM 14222 / CIP 103919 / JCM 8153 / KCTC 15104).